Reading from the N-terminus, the 324-residue chain is Fibronectin type III domain-containing protein 8 (324 aa).

A Fibronectin type-III domain is found at 179-280 (PDTPFIFEHT…KPYKFATLAT (102 aa)).

This Homo sapiens (Human) protein is Fibronectin type III domain-containing protein 8 (FNDC8).